The primary structure comprises 183 residues: MSQPAKVLLLYAHPESQDSVANRVLLKPAIQHNNVTVHDLYARYPDFFIDTPYEQALLREHDVIVFQHPLYTYSCPALLKEWLDRVLSRGLASGPGGNQLVGKYWRSVITTGEPESAYRYDALNRYPMSDVLRPFELTAAMCRMHWMPPIIVYWARRQSPQTLASHAKAYGEWLANPVSAGGY.

The protein belongs to the NAD(P)H dehydrogenase (quinone) family. KefG subfamily. As to quaternary structure, interacts with KefB.

The protein localises to the cell inner membrane. The catalysed reaction is a quinone + NADH + H(+) = a quinol + NAD(+). The enzyme catalyses a quinone + NADPH + H(+) = a quinol + NADP(+). Regulatory subunit of a potassium efflux system that confers protection against electrophiles. Required for full activity of KefB. This Salmonella gallinarum (strain 287/91 / NCTC 13346) protein is Glutathione-regulated potassium-efflux system ancillary protein KefG.